Consider the following 98-residue polypeptide: Integration host factor subunit alpha (98 aa).

The disordered stretch occupies residues phenylalanine 49–isoleucine 71.

The protein belongs to the bacterial histone-like protein family. As to quaternary structure, heterodimer of an alpha and a beta chain.

This protein is one of the two subunits of integration host factor, a specific DNA-binding protein that functions in genetic recombination as well as in transcriptional and translational control. The chain is Integration host factor subunit alpha from Shewanella halifaxensis (strain HAW-EB4).